Reading from the N-terminus, the 65-residue chain is Muscarinic toxin-like protein 2 (65 aa).

Intrachain disulfides connect C3-C24, C17-C42, C46-C57, and C58-C63.

This sequence belongs to the three-finger toxin family. Short-chain subfamily. Type C muscarinic toxin sub-subfamily. Monomer. As to expression, expressed by the venom gland.

The protein localises to the secreted. The polypeptide is Muscarinic toxin-like protein 2 (Naja kaouthia (Monocled cobra)).